We begin with the raw amino-acid sequence, 209 residues long: Bacteriorhodopsin (209 aa).

A helical membrane pass occupies residues 1-17; that stretch reads LWLGTAGMFLGMLYFIA. Over 18–31 the chain is Cytoplasmic; it reads RGWGETDGRRQKFY. Residues 32–50 traverse the membrane as a helical segment; it reads IATILITAIAFVNYLAMAL. At 51–66 the chain is on the extracellular side; that stretch reads GFGLTFIEFGGEQHPI. A helical membrane pass occupies residues 67–84; the sequence is YWARYTDWLFTTPLLLYD. Residues 85–95 are Cytoplasmic-facing; it reads LGLLAGADRNT. The helical transmembrane segment at 96–115 threads the bilayer; it reads IYSLVSLDVLMIGTGVVATL. Residues 116–128 lie on the Extracellular side of the membrane; sequence SAGSGVLSAGAER. A helical transmembrane segment spans residues 129-148; that stretch reads LVWWGISTAFLLVLLYFLFS. The Cytoplasmic portion of the chain corresponds to 149–166; that stretch reads SLSGRVANLPSDTRSTFK. The chain crosses the membrane as a helical span at residues 167-185; that stretch reads TLRNLVTVVWLVYPVWWLV. The Extracellular segment spans residues 186 to 197; the sequence is GSEGLGLVGIGI. The chain crosses the membrane as a helical span at residues 198-209; sequence ETAGFMVIDLVA.

The protein belongs to the archaeal/bacterial/fungal opsin family.

The protein resides in the cell membrane. Functionally, light-driven proton pump. The polypeptide is Bacteriorhodopsin (bop) (Halobacterium halobium (strain shark)).